The chain runs to 383 residues: Queuine tRNA-ribosyltransferase (383 aa).

D92 acts as the Proton acceptor in catalysis. Substrate-binding positions include 92-96, D146, Q190, and G217; that span reads DSGGF. The tract at residues 248–254 is RNA binding; sequence GVGKPED. The active-site Nucleophile is the D267. The segment at 272 to 276 is RNA binding; important for wobble base 34 recognition; sequence TRNAR. Residues C310, C312, C315, and H341 each coordinate Zn(2+).

This sequence belongs to the queuine tRNA-ribosyltransferase family. As to quaternary structure, homodimer. Within each dimer, one monomer is responsible for RNA recognition and catalysis, while the other monomer binds to the replacement base PreQ1. Zn(2+) is required as a cofactor.

The catalysed reaction is 7-aminomethyl-7-carbaguanine + guanosine(34) in tRNA = 7-aminomethyl-7-carbaguanosine(34) in tRNA + guanine. It participates in tRNA modification; tRNA-queuosine biosynthesis. Functionally, catalyzes the base-exchange of a guanine (G) residue with the queuine precursor 7-aminomethyl-7-deazaguanine (PreQ1) at position 34 (anticodon wobble position) in tRNAs with GU(N) anticodons (tRNA-Asp, -Asn, -His and -Tyr). Catalysis occurs through a double-displacement mechanism. The nucleophile active site attacks the C1' of nucleotide 34 to detach the guanine base from the RNA, forming a covalent enzyme-RNA intermediate. The proton acceptor active site deprotonates the incoming PreQ1, allowing a nucleophilic attack on the C1' of the ribose to form the product. After dissociation, two additional enzymatic reactions on the tRNA convert PreQ1 to queuine (Q), resulting in the hypermodified nucleoside queuosine (7-(((4,5-cis-dihydroxy-2-cyclopenten-1-yl)amino)methyl)-7-deazaguanosine). The chain is Queuine tRNA-ribosyltransferase from Psychrobacter sp. (strain PRwf-1).